A 125-amino-acid polypeptide reads, in one-letter code: Glycine cleavage system H protein (125 aa).

The 83-residue stretch at 22 to 104 folds into the Lipoyl-binding domain; that stretch reads SYVIGITDFA…YDTGWILKLE (83 aa). N6-lipoyllysine is present on Lys-63.

The protein belongs to the GcvH family. In terms of assembly, the glycine cleavage system is composed of four proteins: P, T, L and H. The cofactor is (R)-lipoate.

The glycine cleavage system catalyzes the degradation of glycine. The H protein shuttles the methylamine group of glycine from the P protein to the T protein. Its function is as follows. Is also involved in protein lipoylation via its role as an octanoyl/lipoyl carrier protein intermediate. The sequence is that of Glycine cleavage system H protein from Listeria monocytogenes serotype 4a (strain HCC23).